The chain runs to 323 residues: SURF1-like protein (323 aa).

The span at 57–71 (DAPKSRENREKDGGK) shows a compositional bias: basic and acidic residues. Residues 57 to 76 (DAPKSRENREKDGGKSKKSK) are disordered. The next 2 helical transmembrane spans lie at 81–101 (WSTG…LGIW) and 299–319 (HLNY…MWIH).

It belongs to the SURF1 family.

It is found in the mitochondrion inner membrane. Functionally, probably involved in the biogenesis of the COX complex. The protein is SURF1-like protein (sft-1) of Caenorhabditis elegans.